The following is a 360-amino-acid chain: Phospho-N-acetylmuramoyl-pentapeptide-transferase (360 aa).

At 1 to 25 (MLVWLAEHLVKYYSGFNVFSYLTFR) the chain is on the periplasmic side. A helical transmembrane segment spans residues 26-46 (AIVSLLTALFISLWMGPRMIA). Residues 47-71 (RLQKLSFGQVVRNDGPESHFSKRGT) are Cytoplasmic-facing. The helical transmembrane segment at 72 to 92 (PTMGGIMILTAIVISVLLWAY) threads the bilayer. A topological domain (periplasmic) is located at residue Pro-93. Residues 94 to 114 (SNPYVWCVLVVLIGYGIIGFV) traverse the membrane as a helical segment. The Cytoplasmic segment spans residues 115 to 131 (DDYRKVVRKDTKGLIAR). A helical membrane pass occupies residues 132–152 (WKYFWMSVIALGVAFALYLVG). Residues 153–167 (KDTPVTQLVVPFFKD) are Periplasmic-facing. Residues 168–188 (VMPQLGLFYILLSYFVIVGTG) traverse the membrane as a helical segment. At 189-198 (NAVNLTDGLD) the chain is on the cytoplasmic side. Residues 199-219 (GLAIMPTVFVAAGFALVAWAT) traverse the membrane as a helical segment. The Periplasmic portion of the chain corresponds to 220–235 (GNMNFANYLHIPYLRH). Residues 236–256 (AGELVIVCTAIVGAGLGFLWF) form a helical membrane-spanning segment. Topologically, residues 257–262 (NTYPAQ) are cytoplasmic. The chain crosses the membrane as a helical span at residues 263 to 283 (VFMGDVGSLALGGALGIIAVL). Residues 284–287 (LRQE) lie on the Periplasmic side of the membrane. Residues 288–308 (FLLVIMGGVFVVETLSVILQV) form a helical membrane-spanning segment. Residues 309–337 (GSFKLRGQRIFRMAPIHHHYELKGWPEPR) lie on the Cytoplasmic side of the membrane. Residues 338–358 (VIVRFWIISLMLVLIGLATLK) form a helical membrane-spanning segment. Residues 359-360 (VR) are Periplasmic-facing.

It belongs to the glycosyltransferase 4 family. MraY subfamily. Mg(2+) is required as a cofactor.

The protein resides in the cell inner membrane. It catalyses the reaction UDP-N-acetyl-alpha-D-muramoyl-L-alanyl-gamma-D-glutamyl-meso-2,6-diaminopimeloyl-D-alanyl-D-alanine + di-trans,octa-cis-undecaprenyl phosphate = di-trans,octa-cis-undecaprenyl diphospho-N-acetyl-alpha-D-muramoyl-L-alanyl-D-glutamyl-meso-2,6-diaminopimeloyl-D-alanyl-D-alanine + UMP. Its pathway is cell wall biogenesis; peptidoglycan biosynthesis. Its function is as follows. Catalyzes the initial step of the lipid cycle reactions in the biosynthesis of the cell wall peptidoglycan: transfers peptidoglycan precursor phospho-MurNAc-pentapeptide from UDP-MurNAc-pentapeptide onto the lipid carrier undecaprenyl phosphate, yielding undecaprenyl-pyrophosphoryl-MurNAc-pentapeptide, known as lipid I. The chain is Phospho-N-acetylmuramoyl-pentapeptide-transferase from Salmonella paratyphi C (strain RKS4594).